Consider the following 888-residue polypeptide: CRISPR-associated endonuclease/helicase Cas3 (888 aa).

An HD Cas3-type domain is found at 20-231 (KGNDIHLLIY…AGFCSLADWL (212 aa)). Mg(2+) is bound by residues aspartate 75 and histidine 160. The Helicase ATP-binding domain occupies 301–504 (DALPVAPGLT…LDTYGLHTDP (204 aa)). Residue 314-321 (APTGSGKT) coordinates ATP. The short motif at 452 to 455 (DEVH) is the DEAH box element. Residues 556-735 (MLERMIAAAN…AYRQWLDSIY (180 aa)) enclose the Helicase C-terminal domain.

This sequence in the N-terminal section; belongs to the CRISPR-associated nuclease Cas3-HD family. It in the central section; belongs to the CRISPR-associated helicase Cas3 family. As to quaternary structure, interacts with the CasA subunit of Cascade once Cascade has recognized target DNA. Mg(2+) serves as cofactor.

Its function is as follows. CRISPR (clustered regularly interspaced short palindromic repeat), is an adaptive immune system that provides protection against mobile genetic elements (viruses, transposable elements and conjugative plasmids). CRISPR clusters contain sequences complementary to antecedent mobile elements and target invading nucleic acids. CRISPR clusters are transcribed and processed into CRISPR RNA (crRNA). Cas3 plus Cascade participate in CRISPR interference, the third stage of CRISPR immunity. Functionally, acts as an endonuclease, a 3'-5'exonuclease, and an ATP-dependent dsDNA helicase. Anneals and unwinds R-loops (in which crRNA binds the target DNA, displacing the noncomplementary strand). Unwinding requires ATP, annealing does not. Required along with the Cascade complex for resistance to bacteriophage lambda infection as well as the ability to cure CRISPR-encoding high-copy number plasmid. A Cas3-CasA fusion protein purified with the Cascade complex nicks target plasmid in the presence but not absence of Mg(2+), and degrades plasmid fully in the presence of Mg(2+) and ATP, suggesting the helicase activity is required for complete degradation. This chain is CRISPR-associated endonuclease/helicase Cas3 (ygcB), found in Escherichia coli (strain K12).